The sequence spans 853 residues: Protein translocase subunit SecA (853 aa).

ATP-binding positions include Gln-77, 95-99 (GEGKT), and Asp-532.

This sequence belongs to the SecA family. Monomer and homodimer. Part of the essential Sec protein translocation apparatus which comprises SecA, SecYEG and auxiliary proteins SecDF. Other proteins may also be involved.

It localises to the cell inner membrane. The protein resides in the cytoplasm. The enzyme catalyses ATP + H2O + cellular proteinSide 1 = ADP + phosphate + cellular proteinSide 2.. Its function is as follows. Part of the Sec protein translocase complex. Interacts with the SecYEG preprotein conducting channel. Has a central role in coupling the hydrolysis of ATP to the transfer of proteins into and across the cell membrane, serving as an ATP-driven molecular motor driving the stepwise translocation of polypeptide chains across the membrane. This chain is Protein translocase subunit SecA, found in Thermosipho melanesiensis (strain DSM 12029 / CIP 104789 / BI429).